Consider the following 504-residue polypeptide: Probable cytochrome P450 513E1 (504 aa).

A helical membrane pass occupies residues 1-21 (MNLYISILILIISLIIFFKNN). Position 450 (C450) interacts with heme.

The protein belongs to the cytochrome P450 family. It depends on heme as a cofactor.

It is found in the membrane. The protein is Probable cytochrome P450 513E1 (cyp513E1) of Dictyostelium discoideum (Social amoeba).